The sequence spans 407 residues: Fructose-1,6-bisphosphatase, chloroplastic (407 aa).

The transit peptide at 1–50 directs the protein to the chloroplast; that stretch reads MAAATASSQLIFSKPYSPSRLCPFQLCVFDAKSVLSSSRRKHVNGSGVRC. 5 residues coordinate Mg(2+): Glu-126, Glu-155, Asp-176, Leu-178, and Asp-179. A substrate-binding site is contributed by 179 to 182; the sequence is DGSS. Cysteines 203 and 223 form a disulfide. 5 residues coordinate substrate: Asn-287, Tyr-319, Tyr-337, Tyr-339, and Lys-349. Glu-355 serves as a coordination point for Mg(2+).

The protein belongs to the FBPase class 1 family. As to quaternary structure, homotetramer. Mg(2+) is required as a cofactor.

The protein resides in the plastid. It is found in the chloroplast stroma. It carries out the reaction beta-D-fructose 1,6-bisphosphate + H2O = beta-D-fructose 6-phosphate + phosphate. The protein operates within carbohydrate biosynthesis; Calvin cycle. This is Fructose-1,6-bisphosphatase, chloroplastic (FBP) from Pisum sativum (Garden pea).